The sequence spans 464 residues: MDVAGKKVAVLGARRSGMAVAELLSLKGASVFVSELGTIGAHESARLQALRIPFEEGGHSDNVLCTDFCVISPGIPGRAPVVRAMLEKGIPLFSEIEVAYWFCKARIIGITGTDGKTTTATLVHRIFETDGMTHRYRAFSVGNIGQPFSSRVLTMRPEDVAVIELSSYQLEGCCTFRPDVSVITNITPDHLDRYEGELHNYAQTKYRIYAHQGKEDTLVYNDDDPLLHDHFASNRETLPCRIVPFGIGCKPEHAGFAAAVRFCDHRIVFDAGAKSENIIEAEDFLKRSFRGRHNIANALAAVAAARALGIGNEAIRSALQGFSGVEHRQEFVRTLDGSDWINDSKATNINALSQALETVPGRMVLIAGGRDKGSDYREIAGIVRKKVAALVAIGEAREKLCAAYGGMVDVRSANSLEEAVSLARALVEPGQTVLFSPGCSSFDMFEDFEDRGRQFKKLTTDLRS.

An ATP-binding site is contributed by 112-118 (GTDGKTT).

It belongs to the MurCDEF family.

Its subcellular location is the cytoplasm. The catalysed reaction is UDP-N-acetyl-alpha-D-muramoyl-L-alanine + D-glutamate + ATP = UDP-N-acetyl-alpha-D-muramoyl-L-alanyl-D-glutamate + ADP + phosphate + H(+). The protein operates within cell wall biogenesis; peptidoglycan biosynthesis. Its function is as follows. Cell wall formation. Catalyzes the addition of glutamate to the nucleotide precursor UDP-N-acetylmuramoyl-L-alanine (UMA). This Chlorobium phaeobacteroides (strain DSM 266 / SMG 266 / 2430) protein is UDP-N-acetylmuramoylalanine--D-glutamate ligase.